The primary structure comprises 141 residues: VLSAADKTNVKGVFSKIGGHADDYGAETLERMFIAYPQTKTYFPHFDLQHGSAQIKAHGKKVAAALVEAVNHIDDIAGALSKLSDLHAQKLRVDPVNFKFLGHCFLVVVAIHHPSALTPEVHASLDKFLCAVGAVLTAKYR.

The region spanning 1–141 (VLSAADKTNV…VGAVLTAKYR (141 aa)) is the Globin domain. Residue H58 participates in O2 binding. H87 is a binding site for heme b.

Belongs to the globin family. In terms of assembly, heterotetramer of two alpha chains and two beta chains. As to expression, red blood cells.

Functionally, involved in oxygen transport from the lung to the various peripheral tissues. The chain is Hemoglobin subunit alpha-A (HBAA) from Cygnus olor (Mute swan).